The chain runs to 278 residues: UPF0761 membrane protein CBU_1578 (278 aa).

A run of 7 helical transmembrane segments spans residues 38–58 (LLALVPLTIVAFTLLSFVPAF), 68–88 (LIWENFVPTSAGMVAAYLSQL), 92–112 (VTGLSIINIFFLGIVALLLMY), 134–154 (FLIYFMVLLLSPFLLGAVMLL), 177–197 (LLFVLPYVLIFITFTLFNWVL), 207–227 (AVIGGLVTTVLFELAKFAFTV), and 244–264 (VIPIFLVWLYVSWTIILLGAV).

This sequence belongs to the UPF0761 family.

It is found in the cell inner membrane. This is UPF0761 membrane protein CBU_1578 from Coxiella burnetii (strain RSA 493 / Nine Mile phase I).